We begin with the raw amino-acid sequence, 188 residues long: Glutathione S-transferase 2 (188 aa).

A GST N-terminal domain is found at 2–79 (VHYKLMCFDV…FLARQYGYSG (78 aa)). Residues Lys-43, 49–51 (GQL), and 63–64 (QS) contribute to the glutathione site. In terms of domain architecture, GST C-terminal spans 81-188 (TPTEEMQVDS…PHLNVFIRKL (108 aa)).

The protein belongs to the GST superfamily. Sigma family.

It catalyses the reaction RX + glutathione = an S-substituted glutathione + a halide anion + H(+). Functionally, conjugation of reduced glutathione to a wide number of exogenous and endogenous hydrophobic electrophiles. The chain is Glutathione S-transferase 2 (gst-2) from Caenorhabditis elegans.